The following is a 398-amino-acid chain: 1-deoxy-D-xylulose 5-phosphate reductoisomerase (398 aa).

Residues Thr11, Gly12, Ser13, Ile14, and Asn125 each coordinate NADPH. Residue Lys126 participates in 1-deoxy-D-xylulose 5-phosphate binding. Glu127 is a binding site for NADPH. Asp151 serves as a coordination point for Mn(2+). Ser152, Glu153, Ser186, and His209 together coordinate 1-deoxy-D-xylulose 5-phosphate. Glu153 provides a ligand contact to Mn(2+). Position 215 (Gly215) interacts with NADPH. 1-deoxy-D-xylulose 5-phosphate-binding residues include Ser222, Asn227, Lys228, and Glu231. Glu231 provides a ligand contact to Mn(2+).

Belongs to the DXR family. The cofactor is Mg(2+). Mn(2+) is required as a cofactor.

The enzyme catalyses 2-C-methyl-D-erythritol 4-phosphate + NADP(+) = 1-deoxy-D-xylulose 5-phosphate + NADPH + H(+). The protein operates within isoprenoid biosynthesis; isopentenyl diphosphate biosynthesis via DXP pathway; isopentenyl diphosphate from 1-deoxy-D-xylulose 5-phosphate: step 1/6. Its function is as follows. Catalyzes the NADPH-dependent rearrangement and reduction of 1-deoxy-D-xylulose-5-phosphate (DXP) to 2-C-methyl-D-erythritol 4-phosphate (MEP). This chain is 1-deoxy-D-xylulose 5-phosphate reductoisomerase, found in Acinetobacter baylyi (strain ATCC 33305 / BD413 / ADP1).